The following is a 613-amino-acid chain: Ribosome-associated molecular chaperone SSB1 (613 aa).

The segment at 1–391 (MADGVFQGAI…ILTGQSTNDD (391 aa)) is nucleotide binding domain (NBD). ATP contacts are provided by residues 16–18 (TTY), Lys-73, 205–207 (GGT), 271–278 (ERAKRSLS), and Gly-342. An inter-domain linker region spans residues 392-402 (TKDLLLLDVIP). The substrate binding domain (SBD) stretch occupies residues 403 to 613 (LSLGVAMQGN…RAVTKGMATR (211 aa)). The interval 516-612 (TEEIEKMISD…KRAVTKGMAT (97 aa)) is lid domain (SBDalpha). Residues 574–582 (IEAALSDAL) carry the Nuclear export signal motif.

It belongs to the heat shock protein 70 family. Ssb-type Hsp70 subfamily. In terms of assembly, binds to ribosomes. Binds close to the ribosomal tunnel exit via contacts with both ribosomal proteins and rRNA. Directly interacts with nascent polypeptides. This interaction is dependent on the ribosome-associated complex (RAC). Interacts with SSE1. Interacts with FES1.

It is found in the cytoplasm. The enzyme catalyses ATP + H2O = ADP + phosphate + H(+). Ribosome-bound, Hsp70-type chaperone that assists in the cotranslational folding of newly synthesized proteins in the cytosol. Stimulates folding by interacting with nascent chains, binding to short, largely hydrophobic sequences exposed by unfolded proteins, thereby stabilizing longer, more slowly translated, and aggregation-prone nascent polypeptides and domains that cannot fold stably until fully synthesized. The Hsp70-protein substrate interaction depends on ATP-binding and on allosteric regulation between the NBD and the SBD. The ATP-bound state is characterized by a fast exchange rate of substrate (low affinity state), while in the ADP-bound state exchange is much slower (high affinity state). During the Hsp70 cycle, the chaperone switches between the ATP-bound state (open conformation) and the ADP-bound state (closed conformation) by major conformational rearrangements involving mainly the lid domain. Ssb cooperates with a specific Hsp40/Hsp70 co-chaperone termed the ribosome-associated complex (RAC), which stimulates the ATPase activity of the ribosome-associated pool of Ssbs and switches it to the high affinity substrate binding state. Hsp110 chaperone SSE1 and FES1 act as nucleotide exchange factors that cause substrate release. In Candida albicans (strain WO-1) (Yeast), this protein is Ribosome-associated molecular chaperone SSB1 (SSB1).